The primary structure comprises 124 residues: Small ribosomal subunit protein uS12 (124 aa).

A disordered region spans residues 1–30 (MPTIQQLVRKGRTPKVTKTKAPALKANPQQ). The segment covering 9-18 (RKGRTPKVTK) has biased composition (basic residues).

The protein belongs to the universal ribosomal protein uS12 family. In terms of assembly, part of the 30S ribosomal subunit. Contacts proteins S8 and S17. May interact with IF1 in the 30S initiation complex.

Functionally, with S4 and S5 plays an important role in translational accuracy. Interacts with and stabilizes bases of the 16S rRNA that are involved in tRNA selection in the A site and with the mRNA backbone. Located at the interface of the 30S and 50S subunits, it traverses the body of the 30S subunit contacting proteins on the other side and probably holding the rRNA structure together. The combined cluster of proteins S8, S12 and S17 appears to hold together the shoulder and platform of the 30S subunit. The protein is Small ribosomal subunit protein uS12 of Leifsonia xyli subsp. xyli (strain CTCB07).